Reading from the N-terminus, the 158-residue chain is MRIGYGYDSHAFAENRKLILSGIEIPYELGLKGHSDADAVIHALIDSILGALALGDIGSHFPDNDSKYKGISSIVLLEKTVSIMEEKNYEISNTDITIILEKPKLRNYIDTMRENLSKILKTDIENVSIKAKTNEKMDSIGRGEGIAVHCVSLLKKTK.

Asp-8 and His-10 together coordinate a divalent metal cation. 4-CDP-2-C-methyl-D-erythritol 2-phosphate-binding positions include 8–10 (DSH) and 34–35 (HS). Position 42 (His-42) interacts with a divalent metal cation. 4-CDP-2-C-methyl-D-erythritol 2-phosphate contacts are provided by residues 56–58 (DIG), 61–65 (FPDND), and Arg-142.

This sequence belongs to the IspF family. In terms of assembly, homotrimer. A divalent metal cation is required as a cofactor.

It catalyses the reaction 4-CDP-2-C-methyl-D-erythritol 2-phosphate = 2-C-methyl-D-erythritol 2,4-cyclic diphosphate + CMP. Its pathway is isoprenoid biosynthesis; isopentenyl diphosphate biosynthesis via DXP pathway; isopentenyl diphosphate from 1-deoxy-D-xylulose 5-phosphate: step 4/6. Its function is as follows. Involved in the biosynthesis of isopentenyl diphosphate (IPP) and dimethylallyl diphosphate (DMAPP), two major building blocks of isoprenoid compounds. Catalyzes the conversion of 4-diphosphocytidyl-2-C-methyl-D-erythritol 2-phosphate (CDP-ME2P) to 2-C-methyl-D-erythritol 2,4-cyclodiphosphate (ME-CPP) with a corresponding release of cytidine 5-monophosphate (CMP). The chain is 2-C-methyl-D-erythritol 2,4-cyclodiphosphate synthase from Brachyspira hyodysenteriae (strain ATCC 49526 / WA1).